Consider the following 83-residue polypeptide: Small ribosomal subunit protein bS16 (83 aa).

It belongs to the bacterial ribosomal protein bS16 family.

The protein is Small ribosomal subunit protein bS16 of Shewanella putrefaciens (strain CN-32 / ATCC BAA-453).